The following is a 206-amino-acid chain: Large ribosomal subunit protein uL4 (206 aa).

The segment at 63–96 (MYKQKGTGRARHHSARAPQFRGGGKAHGPVVRSH) is disordered. The span at 64-77 (YKQKGTGRARHHSA) shows a compositional bias: basic residues.

Belongs to the universal ribosomal protein uL4 family. In terms of assembly, part of the 50S ribosomal subunit.

One of the primary rRNA binding proteins, this protein initially binds near the 5'-end of the 23S rRNA. It is important during the early stages of 50S assembly. It makes multiple contacts with different domains of the 23S rRNA in the assembled 50S subunit and ribosome. In terms of biological role, forms part of the polypeptide exit tunnel. This chain is Large ribosomal subunit protein uL4, found in Allorhizobium ampelinum (strain ATCC BAA-846 / DSM 112012 / S4) (Agrobacterium vitis (strain S4)).